The chain runs to 776 residues: Structure-specific endonuclease subunit SLX4 (776 aa).

Acidic residues predominate over residues 201–217 (EEQMVSDDNSSTEDDTD). 3 disordered regions span residues 201 to 223 (EEQMVSDDNSSTEDDTDPTQNDG), 263 to 283 (KSLQRHSQKDSDNGNTIPDQN), and 507 to 531 (PPLDACSDSGPTGVVSSMPYKKPHS).

It belongs to the SLX4 family. As to quaternary structure, forms a heterodimer with SLX1. Phosphorylated in response to DNA damage.

The protein localises to the nucleus. Its function is as follows. Regulatory subunit of the SLX1-SLX4 structure-specific endonuclease that resolves DNA secondary structures generated during DNA repair and recombination. Has endonuclease activity towards branched DNA substrates, introducing single-strand cuts in duplex DNA close to junctions with ss-DNA. The chain is Structure-specific endonuclease subunit SLX4 from Candida albicans (strain SC5314 / ATCC MYA-2876) (Yeast).